Here is a 361-residue protein sequence, read N- to C-terminus: Eukaryotic translation initiation factor 3 subunit F (361 aa).

The segment at 1-86 (MATPAVPVSA…PAPALPGPAL (86 aa)) is disordered. Ala2 is modified (N-acetylalanine). Pro residues-rich tracts occupy residues 9–20 (SAPPATPAPVPA) and 30–40 (VPAPTPAPAAA). The span at 41–78 (PVPAAAPASSSDPAAAAATTAAPGQTPASAQAPAQTPA) shows a compositional bias: low complexity. Ser50 is subject to Phosphoserine; by CDK11; in vitro. The region spanning 96-226 (VRLHPVILAS…IKAYVSTLMG (131 aa)) is the MPN domain. At Lys242 the chain carries N6-acetyllysine. Phosphoserine is present on Ser262.

The protein belongs to the eIF-3 subunit F family. As to quaternary structure, component of the eukaryotic translation initiation factor 3 (eIF-3) complex, which is composed of 13 subunits: EIF3A, EIF3B, EIF3C, EIF3D, EIF3E, EIF3F, EIF3G, EIF3H, EIF3I, EIF3J, EIF3K, EIF3L and EIF3M. The eIF-3 complex appears to include 3 stable modules: module A is composed of EIF3A, EIF3B, EIF3G and EIF3I; module B is composed of EIF3F, EIF3H, and EIF3M; and module C is composed of EIF3C, EIF3D, EIF3E, EIF3K and EIF3L. EIF3C of module C binds EIF3B of module A and EIF3H of module B, thereby linking the three modules. EIF3J is a labile subunit that binds to the eIF-3 complex via EIF3B. The eIF-3 complex interacts with RPS6KB1 under conditions of nutrient depletion. Mitogenic stimulation leads to binding and activation of a complex composed of MTOR and RPTOR, leading to phosphorylation and release of RPS6KB1 and binding of EIF4B to eIF-3. Interacts with RNF139; the interaction leads to protein translation inhibitions in a ubiquitination-dependent manner. Interacts with DTX1, the interaction is required for deubiquitinating activity towards NOTCH1. In terms of processing, phosphorylation is enhanced upon serum stimulation. Phosphorylated during apoptosis by caspase-processed CDK11.

The protein localises to the cytoplasm. The catalysed reaction is Thiol-dependent hydrolysis of ester, thioester, amide, peptide and isopeptide bonds formed by the C-terminal Gly of ubiquitin (a 76-residue protein attached to proteins as an intracellular targeting signal).. Its function is as follows. Component of the eukaryotic translation initiation factor 3 (eIF-3) complex, which is required for several steps in the initiation of protein synthesis. The eIF-3 complex associates with the 40S ribosome and facilitates the recruitment of eIF-1, eIF-1A, eIF-2:GTP:methionyl-tRNAi and eIF-5 to form the 43S pre-initiation complex (43S PIC). The eIF-3 complex stimulates mRNA recruitment to the 43S PIC and scanning of the mRNA for AUG recognition. The eIF-3 complex is also required for disassembly and recycling of post-termination ribosomal complexes and subsequently prevents premature joining of the 40S and 60S ribosomal subunits prior to initiation. The eIF-3 complex specifically targets and initiates translation of a subset of mRNAs involved in cell proliferation, including cell cycling, differentiation and apoptosis, and uses different modes of RNA stem-loop binding to exert either translational activation or repression. Functionally, deubiquitinates activated NOTCH1, promoting its nuclear import, thereby acting as a positive regulator of Notch signaling. The protein is Eukaryotic translation initiation factor 3 subunit F of Pan troglodytes (Chimpanzee).